A 323-amino-acid polypeptide reads, in one-letter code: CYFIP-related Rac1 interactor A (323 aa).

The protein belongs to the CYRI family. As to quaternary structure, interacts with RAC1 (GTP-bound form preferentially).

It is found in the membrane. May negatively regulate RAC1 signaling and RAC1-driven cytoskeletal remodeling. May regulate chemotaxis, cell migration and epithelial polarization by controlling the polarity, plasticity, duration and extent of protrusions. The polypeptide is CYFIP-related Rac1 interactor A (CYRIA) (Bos taurus (Bovine)).